A 72-amino-acid chain; its full sequence is Translation initiation factor IF-1 (72 aa).

The S1-like domain occupies 1–72 (MPKEEVLEFP…TKGRITYRFK (72 aa)).

This sequence belongs to the IF-1 family. As to quaternary structure, component of the 30S ribosomal translation pre-initiation complex which assembles on the 30S ribosome in the order IF-2 and IF-3, IF-1 and N-formylmethionyl-tRNA(fMet); mRNA recruitment can occur at any time during PIC assembly.

It is found in the cytoplasm. Its function is as follows. One of the essential components for the initiation of protein synthesis. Stabilizes the binding of IF-2 and IF-3 on the 30S subunit to which N-formylmethionyl-tRNA(fMet) subsequently binds. Helps modulate mRNA selection, yielding the 30S pre-initiation complex (PIC). Upon addition of the 50S ribosomal subunit IF-1, IF-2 and IF-3 are released leaving the mature 70S translation initiation complex. The chain is Translation initiation factor IF-1 from Rhizobium etli (strain ATCC 51251 / DSM 11541 / JCM 21823 / NBRC 15573 / CFN 42).